Reading from the N-terminus, the 145-residue chain is MNAYDAYMKEIAQQMRGELTQNGFTSLETSEEVSEYMNQVNADDTTFVVINSTCGCAAGLARPAAVAVATQNEHRPTNTVTVFAGQDKEATATMREFIQQVPSSPSYALFKGRDLVYFMPREFIEGRDINDIAMDLKDAFDENCK.

Belongs to the bacilliredoxin family.

This Staphylococcus aureus (strain MRSA252) protein is Bacilliredoxin SAR1441.